A 74-amino-acid polypeptide reads, in one-letter code: Turripeptide OL135 (74 aa).

The first 20 residues, 1 to 20 (MKVPIVLMLVLLLIMPLSDG), serve as a signal peptide directing secretion. A propeptide spanning residues 21 to 28 (YERKRXXX) is cleaved from the precursor.

The protein belongs to the conopeptide P-like superfamily. Contains 3 disulfide bonds. In terms of tissue distribution, expressed by the venom duct.

It is found in the secreted. Acts as a neurotoxin by inhibiting an ion channel. In Iotyrris olangoensis (Sea snail), this protein is Turripeptide OL135.